Consider the following 761-residue polypeptide: Phosphoribosylformylglycinamidine synthase subunit PurL (761 aa).

His49 is an active-site residue. Tyr52 and Lys92 together coordinate ATP. Glu94 serves as a coordination point for Mg(2+). Residues 95–98 and Arg117 contribute to the substrate site; that span reads SHNH. Catalysis depends on His96, which acts as the Proton acceptor. Residue Asp118 coordinates Mg(2+). Gln241 is a binding site for substrate. Asp269 contacts Mg(2+). 318 to 320 is a substrate binding site; that stretch reads ESQ. ATP is bound by residues Asn502 and Gly539. Asn540 contributes to the Mg(2+) binding site. Position 542 (Ser542) interacts with substrate.

It belongs to the FGAMS family. In terms of assembly, monomer. Part of the FGAM synthase complex composed of 1 PurL, 1 PurQ and 2 PurS subunits.

The protein resides in the cytoplasm. It catalyses the reaction N(2)-formyl-N(1)-(5-phospho-beta-D-ribosyl)glycinamide + L-glutamine + ATP + H2O = 2-formamido-N(1)-(5-O-phospho-beta-D-ribosyl)acetamidine + L-glutamate + ADP + phosphate + H(+). It participates in purine metabolism; IMP biosynthesis via de novo pathway; 5-amino-1-(5-phospho-D-ribosyl)imidazole from N(2)-formyl-N(1)-(5-phospho-D-ribosyl)glycinamide: step 1/2. Functionally, part of the phosphoribosylformylglycinamidine synthase complex involved in the purines biosynthetic pathway. Catalyzes the ATP-dependent conversion of formylglycinamide ribonucleotide (FGAR) and glutamine to yield formylglycinamidine ribonucleotide (FGAM) and glutamate. The FGAM synthase complex is composed of three subunits. PurQ produces an ammonia molecule by converting glutamine to glutamate. PurL transfers the ammonia molecule to FGAR to form FGAM in an ATP-dependent manner. PurS interacts with PurQ and PurL and is thought to assist in the transfer of the ammonia molecule from PurQ to PurL. The sequence is that of Phosphoribosylformylglycinamidine synthase subunit PurL from Chlorobium chlorochromatii (strain CaD3).